The chain runs to 76 residues: Alpha/kappa-conotoxin-like fe14.1 (76 aa).

Positions 1 to 24 (MPSVRSVTCCCLLWMMLSVQLVTP) are cleaved as a signal peptide. Positions 25 to 39 (GSPGTAQLSGHRTAR) are excised as a propeptide. Cystine bridges form between cysteine 46–cysteine 61 and cysteine 50–cysteine 63. At arginine 64 the chain carries Arginine amide. A propeptide spanning residues 65-76 (GKRDVVSSSMAV) is cleaved from the precursor.

The protein belongs to the conotoxin J superfamily. As to expression, expressed by the venom duct.

It is found in the secreted. In terms of biological role, highly inhibits both nicotinic acetylcholine receptors (neuronal (alpha-3/beta-4) and muscular (alpha-1/beta-1/epsilon/delta) subtypes) and the voltage-gated potassium channel Kv1.6/KCNA6 subtype. This Conus ferrugineus (Cone snail) protein is Alpha/kappa-conotoxin-like fe14.1.